The primary structure comprises 228 residues: Lactate utilization protein A (228 aa).

This sequence belongs to the LutA/YkgE family.

Functionally, is involved in L-lactate degradation and allows cells to grow with lactate as the sole carbon source. The protein is Lactate utilization protein A of Lysinibacillus sphaericus (strain C3-41).